The chain runs to 248 residues: 3-deoxy-manno-octulosonate cytidylyltransferase (248 aa).

It belongs to the KdsB family.

Its subcellular location is the cytoplasm. It carries out the reaction 3-deoxy-alpha-D-manno-oct-2-ulosonate + CTP = CMP-3-deoxy-beta-D-manno-octulosonate + diphosphate. It participates in nucleotide-sugar biosynthesis; CMP-3-deoxy-D-manno-octulosonate biosynthesis; CMP-3-deoxy-D-manno-octulosonate from 3-deoxy-D-manno-octulosonate and CTP: step 1/1. It functions in the pathway bacterial outer membrane biogenesis; lipopolysaccharide biosynthesis. In terms of biological role, activates KDO (a required 8-carbon sugar) for incorporation into bacterial lipopolysaccharide in Gram-negative bacteria. This is 3-deoxy-manno-octulosonate cytidylyltransferase from Shigella boydii serotype 18 (strain CDC 3083-94 / BS512).